Here is an 89-residue protein sequence, read N- to C-terminus: Cornifin-B (89 aa).

Residues 1-29 (MSSQQQKQPCTPPPQLQQQQVKQPCQPPP) form a disordered region. 8 repeat units span residues 3 to 14 (SQQQKQPCTPPP), 18 to 29 (QQQVKQPCQPPP), 31 to 38 (EPCIPKTK), 39 to 46 (EPCHPKVP), 47 to 54 (EPCHPKVP), 55 to 62 (EPCQPKVP), 63 to 70 (EPCHPKVP), and 71 to 78 (EPCPSIVT). The 2 X 12 AA approximate repeats stretch occupies residues 3–29 (SQQQKQPCTPPPQLQQQQVKQPCQPPP). The interval 31 to 78 (EPCIPKTKEPCHPKVPEPCHPKVPEPCQPKVPEPCHPKVPEPCPSIVT) is 6 X 8 AA approximate tandem repeats.

The protein belongs to the cornifin (SPRR) family. In terms of processing, the N-terminus is blocked. Suprabasal layers of squamous-differentiated tissues such as epidermis, esophagus, tongue and trachea.

The protein localises to the cytoplasm. Functionally, cross-linked envelope protein of keratinocytes. It is a keratinocyte protein that first appears in the cell cytosol, but ultimately becomes cross-linked to membrane proteins by transglutaminase. All that results in the formation of an insoluble envelope beneath the plasma membrane. Can function as both amine donor and acceptor in transglutaminase-mediated cross-linkage. The polypeptide is Cornifin-B (SPRR1B) (Homo sapiens (Human)).